The following is a 269-amino-acid chain: UPF0162 protein bbp_163 (269 aa).

The protein belongs to the UPF0162 family.

In Buchnera aphidicola subsp. Baizongia pistaciae (strain Bp), this protein is UPF0162 protein bbp_163.